Reading from the N-terminus, the 252-residue chain is Proteasome subunit alpha type-3 (252 aa).

This sequence belongs to the peptidase T1A family. In terms of assembly, the 26S proteasome consists of a 20S proteasome core and two 19S regulatory subunits. The 20S proteasome core is composed of 28 subunits that are arranged in four stacked rings, resulting in a barrel-shaped structure. The two end rings are each formed by seven alpha subunits, and the two central rings are each formed by seven beta subunits. The catalytic chamber with the active sites is on the inside of the barrel.

It localises to the cytoplasm. The protein resides in the nucleus. Its function is as follows. The proteasome is a multicatalytic proteinase complex which is characterized by its ability to cleave peptides with Arg, Phe, Tyr, Leu, and Glu adjacent to the leaving group at neutral or slightly basic pH. The proteasome has an ATP-dependent proteolytic activity. The sequence is that of Proteasome subunit alpha type-3 from Acanthamoeba castellanii (Amoeba).